A 415-amino-acid chain; its full sequence is Heterogeneous nuclear ribonucleoprotein F (415 aa).

The residue at position 1 (Met1) is an N-acetylmethionine. An N-acetylmethionine; in Heterogeneous nuclear ribonucleoprotein F, N-terminally processed modification is found at Met2. One can recognise an RRM 1 domain in the interval 11 to 90 (YVVKLRGLPW…RYIEVFKSHR (80 aa)). A Glycyl lysine isopeptide (Lys-Gly) (interchain with G-Cter in SUMO) cross-link involves residue Lys72. The interaction with RNA stretch occupies residues 81–86 (RYIEVF). A Glycyl lysine isopeptide (Lys-Gly) (interchain with G-Cter in SUMO2) cross-link involves residue Lys87. A phosphoserine mark is found at Ser104, Ser107, and Ser161. One can recognise an RRM 2 domain in the interval 111 to 188 (GFVRLRGLPF…RYIEVFKSSQ (78 aa)). Residue Lys167 forms a Glycyl lysine isopeptide (Lys-Gly) (interchain with G-Cter in SUMO2) linkage. The segment at 179–184 (RYIEVF) is interaction with RNA. Residue Lys185 forms a Glycyl lysine isopeptide (Lys-Gly) (interchain with G-Cter in SUMO2) linkage. Phosphoserine is present on residues Ser187, Ser193, and Ser195. An N6-acetyllysine; alternate modification is found at Lys200. A Glycyl lysine isopeptide (Lys-Gly) (interchain with G-Cter in SUMO2); alternate cross-link involves residue Lys200. Residue Thr215 is modified to Phosphothreonine. Lys224 bears the N6-acetyllysine; alternate mark. Lys224 is covalently cross-linked (Glycyl lysine isopeptide (Lys-Gly) (interchain with G-Cter in SUMO2); alternate). Position 265 is a phosphoserine (Ser265). The 78-residue stretch at 289–366 (HCVHMRGLPY…IELFLNSTTG (78 aa)) folds into the RRM 3 domain. Residues 355-360 (RYIELF) are interaction with RNA.

In terms of assembly, identified in the spliceosome C complex. Interacts with AGO1, AGO2, TBP and TXNL4/DIM1. Sumoylated.

Its subcellular location is the nucleus. It localises to the nucleoplasm. Its function is as follows. Component of the heterogeneous nuclear ribonucleoprotein (hnRNP) complexes which provide the substrate for the processing events that pre-mRNAs undergo before becoming functional, translatable mRNAs in the cytoplasm. Plays a role in the regulation of alternative splicing events. Binds G-rich sequences in pre-mRNAs and keeps target RNA in an unfolded state. The protein is Heterogeneous nuclear ribonucleoprotein F (Hnrnpf) of Mus musculus (Mouse).